The chain runs to 437 residues: MQKRHPIIYLLITLLIFVPVSYGALDLELTKGVTAAIPIAIMPFAGPSVLAPGDETIPQVIKNDLQNSGQFRVTGSGNLDQTAASLEQIDYSYWRKQKVNALVVGAINPLGMRRYRVAFTLINVFDSNNRLLSESFNVNAKELRNLAHHISDLIYQKLTGVRGVFSTKIAYVLVQASSENTAAKYTLEVADADGFNPQPLLVSDMPIMSPTWSPDGNKIAYVSFEGHRAAIYLQDLATGRRQRLSEAPGINGAPAFSPDGKQLALVLTKTGNPKIYILNLADGHLREITKGWSIDTEPAWSPDGKSLLFTSNRDGTPQIYNYSFADGSINRVTYRGDYNARPSFMPDGKSIIMMHRENGLFGIARQDLSTGQVQILSESGTDESPSLAPNGKMAIYAMEYGGRGVLAQVSIDGQIKLRLPARNGNVQEPAWSPYLGV.

An N-terminal signal peptide occupies residues 1–23; that stretch reads MQKRHPIIYLLITLLIFVPVSYG.

Belongs to the TolB family. The Tol-Pal system is composed of five core proteins: the inner membrane proteins TolA, TolQ and TolR, the periplasmic protein TolB and the outer membrane protein Pal. They form a network linking the inner and outer membranes and the peptidoglycan layer.

It localises to the periplasm. Its function is as follows. Part of the Tol-Pal system, which plays a role in outer membrane invagination during cell division and is important for maintaining outer membrane integrity. In Coxiella burnetii (strain RSA 493 / Nine Mile phase I), this protein is Tol-Pal system protein TolB.